The sequence spans 975 residues: Importin-11 (975 aa).

Met1 bears the N-acetylmethionine mark. One can recognise an Importin N-terminal domain in the interval 28–100 (AEEQLKQWET…RAGLITNFNE (73 aa)). 15 HEAT repeats span residues 123 to 160 (RQWP…TLAS), 209 to 248 (ERTL…RLKQ), 318 to 356 (VQCM…KMAF), 422 to 459 (QTLT…AVGL), 473 to 509 (WFKN…VKFK), 511 to 548 (DLRP…DFEF), 555 to 593 (PYLE…RVNM), 600 to 636 (GCLV…GLGA), 640 to 677 (NLYP…TLEN), 683 to 720 (PELL…SSTE), 743 to 764 (EGQV…ILGP), 765 to 804 (QMFQ…QNTS), 819 to 849 (QEMD…KLSA), 850 to 887 (LALL…EDPE), and 957 to 974 (METV…FLQG). The residue at position 343 (Ser343) is a Phosphoserine.

It belongs to the importin beta family. In terms of assembly, interacts with UBE2E3 and RPL12.

It localises to the cytoplasm. Its subcellular location is the nucleus. Functions in nuclear protein import as nuclear transport receptor. Serves as receptor for nuclear localization signals (NLS) in cargo substrates. Is thought to mediate docking of the importin/substrate complex to the nuclear pore complex (NPC) through binding to nucleoporin and the complex is subsequently translocated through the pore by an energy requiring, Ran-dependent mechanism. At the nucleoplasmic side of the NPC, Ran binds to the importin, the importin/substrate complex dissociates and importin is re-exported from the nucleus to the cytoplasm where GTP hydrolysis releases Ran. The directionality of nuclear import is thought to be conferred by an asymmetric distribution of the GTP- and GDP-bound forms of Ran between the cytoplasm and nucleus. Mediates the nuclear import of UBE2E3, and of RPL12. The chain is Importin-11 (IPO11) from Homo sapiens (Human).